Reading from the N-terminus, the 276-residue chain is NADPH-dependent 7-cyano-7-deazaguanine reductase (276 aa).

83–85 (VES) is a substrate binding site. Residue 85-86 (SK) participates in NADPH binding. Cys184 acts as the Thioimide intermediate in catalysis. Asp191 functions as the Proton donor in the catalytic mechanism. A substrate-binding site is contributed by 223-224 (HE). 252–253 (RG) serves as a coordination point for NADPH.

This sequence belongs to the GTP cyclohydrolase I family. QueF type 2 subfamily. In terms of assembly, homodimer.

The protein resides in the cytoplasm. It carries out the reaction 7-aminomethyl-7-carbaguanine + 2 NADP(+) = 7-cyano-7-deazaguanine + 2 NADPH + 3 H(+). The protein operates within tRNA modification; tRNA-queuosine biosynthesis. Its function is as follows. Catalyzes the NADPH-dependent reduction of 7-cyano-7-deazaguanine (preQ0) to 7-aminomethyl-7-deazaguanine (preQ1). This is NADPH-dependent 7-cyano-7-deazaguanine reductase from Azotobacter vinelandii (strain DJ / ATCC BAA-1303).